A 480-amino-acid chain; its full sequence is F-box only protein 3 (480 aa).

In terms of domain architecture, F-box spans 10 to 56 (LLTLESLPTDPLLLILSFVDYRDLINCCYVSRRLSQLSTHDPLWRRH). One can recognise an ApaG domain in the interval 278-408 (VATTGDITVS…FHMACPTFRV (131 aa)). A compositionally biased stretch (acidic residues) spans 419–458 (EYEEMEEEAEEEEEEENDDSADMDESDESDADENESDEGE). Residues 419–463 (EYEEMEEEAEEEEEEENDDSADMDESDESDADENESDEGEGEARR) form a disordered region.

Part of a SCF (SKP1-cullin-F-box) protein ligase complex SCF(FBXO3) consisting of FBXO3, SKP1, CUL1 and RBX1. Interacts with PML, interaction is direct and takes place either alone or within the SCF complex.

It localises to the nucleus. The protein operates within protein modification; protein ubiquitination. Functionally, substrate recognition component of the SCF (SKP1-CUL1-F-box protein)-type E3 ubiquitin ligase complex, SCF(FBXO3), which mediates the ubiquitination and subsequent proteasomal degradation of target proteins. Mediates the ubiquitination of HIPK2 and probably that of EP300, leading to rapid degradation by the proteasome. In the presence of PML, HIPK2 ubiquitination still occurs, but degradation is prevented. PML, HIPK2 and FBXO3 may act synergically to activate p53/TP53-dependent transactivation. The SCF(FBXO3) also acts as a regulator of inflammation by mediating ubiquitination and degradation of FBXL2: specifically recognizes FBXL2 phosphorylated at 'Thr-404' and promotes its ubiquitination. This chain is F-box only protein 3 (Fbxo3), found in Mus musculus (Mouse).